Reading from the N-terminus, the 519-residue chain is Histidine ammonia-lyase (519 aa).

The segment at residues 146–148 (ASG) is a cross-link (5-imidazolinone (Ala-Gly)). The residue at position 147 (Ser147) is a 2,3-didehydroalanine (Ser).

This sequence belongs to the PAL/histidase family. Contains an active site 4-methylidene-imidazol-5-one (MIO), which is formed autocatalytically by cyclization and dehydration of residues Ala-Ser-Gly.

It localises to the cytoplasm. The catalysed reaction is L-histidine = trans-urocanate + NH4(+). The protein operates within amino-acid degradation; L-histidine degradation into L-glutamate; N-formimidoyl-L-glutamate from L-histidine: step 1/3. The polypeptide is Histidine ammonia-lyase (Bradyrhizobium diazoefficiens (strain JCM 10833 / BCRC 13528 / IAM 13628 / NBRC 14792 / USDA 110)).